The primary structure comprises 253 residues: Eukaryotic initiation factor 4A-6 (253 aa).

The Helicase ATP-binding domain occupies 1–82 (HVVVGTPGRV…RKFMNKPVRI (82 aa)). The DEAD box signature appears at 30–33 (DEAD). Residues 93 to 253 (GIKQFYVNVD…EELPANVADL (161 aa)) enclose the Helicase C-terminal domain.

The protein belongs to the DEAD box helicase family. eIF4A subfamily. In terms of assembly, eIF4F is a multi-subunit complex, the composition of which varies with external and internal environmental conditions. It is composed of at least EIF4A, EIF4E and EIF4G.

The enzyme catalyses ATP + H2O = ADP + phosphate + H(+). In terms of biological role, ATP-dependent RNA helicase which is a subunit of the eIF4F complex involved in cap recognition and is required for mRNA binding to ribosome. In the current model of translation initiation, eIF4A unwinds RNA secondary structures in the 5'-UTR of mRNAs which is necessary to allow efficient binding of the small ribosomal subunit, and subsequent scanning for the initiator codon. This Nicotiana tabacum (Common tobacco) protein is Eukaryotic initiation factor 4A-6.